The primary structure comprises 209 residues: FMN-dependent NADH:quinone oxidoreductase (209 aa).

FMN-binding positions include Ser-9, 19–21 (SVS), and 143–146 (TRGG).

It belongs to the azoreductase type 1 family. Homodimer. The cofactor is FMN.

The catalysed reaction is 2 a quinone + NADH + H(+) = 2 a 1,4-benzosemiquinone + NAD(+). It catalyses the reaction N,N-dimethyl-1,4-phenylenediamine + anthranilate + 2 NAD(+) = 2-(4-dimethylaminophenyl)diazenylbenzoate + 2 NADH + 2 H(+). Quinone reductase that provides resistance to thiol-specific stress caused by electrophilic quinones. In terms of biological role, also exhibits azoreductase activity. Catalyzes the reductive cleavage of the azo bond in aromatic azo compounds to the corresponding amines. This chain is FMN-dependent NADH:quinone oxidoreductase, found in Leptothrix cholodnii (strain ATCC 51168 / LMG 8142 / SP-6) (Leptothrix discophora (strain SP-6)).